Here is a 360-residue protein sequence, read N- to C-terminus: Phenylalanine--tRNA ligase alpha subunit (360 aa).

Glutamate 260 contacts Mg(2+).

This sequence belongs to the class-II aminoacyl-tRNA synthetase family. Phe-tRNA synthetase alpha subunit type 1 subfamily. In terms of assembly, tetramer of two alpha and two beta subunits. The cofactor is Mg(2+).

It is found in the cytoplasm. It catalyses the reaction tRNA(Phe) + L-phenylalanine + ATP = L-phenylalanyl-tRNA(Phe) + AMP + diphosphate + H(+). This is Phenylalanine--tRNA ligase alpha subunit from Sinorhizobium medicae (strain WSM419) (Ensifer medicae).